A 153-amino-acid polypeptide reads, in one-letter code: SKP1-like protein 9 (153 aa).

The segment at 95–153 (IKAANYLNIKSLFDLACQTVAEIIKGNTPEQIREFFNIENDLTPEEEAAIRRENKWAFE) is interaction with the F-box domain of F-box proteins.

This sequence belongs to the SKP1 family. Part of a SCF (SKP1-cullin-F-box) protein ligase complex. Interacts with CPR1/CPR30 and At3g61590. Expressed in leaves, shoot apical meristem (SAM), roots, flowers and pollen.

It localises to the nucleus. It participates in protein modification; protein ubiquitination. In terms of biological role, involved in ubiquitination and subsequent proteasomal degradation of target proteins. Together with CUL1, RBX1 and a F-box protein, it forms a SCF E3 ubiquitin ligase complex. The functional specificity of this complex depends on the type of F-box protein. In the SCF complex, it serves as an adapter that links the F-box protein to CUL1. The polypeptide is SKP1-like protein 9 (ASK9) (Arabidopsis thaliana (Mouse-ear cress)).